Reading from the N-terminus, the 778-residue chain is Arf-GAP with coiled-coil, ANK repeat and PH domain-containing protein 2 (778 aa).

Positions 1-226 (MKMTVDFEEC…MKDLGAQLDR (226 aa)) constitute a BAR domain. One can recognise a PH domain in the interval 266–361 (GIVMEGYLFK…WIKAVQTSIA (96 aa)). A disordered region spans residues 371 to 391 (SEKLDKKSSPSTGSLDSGNES). Polar residues predominate over residues 379-388 (SPSTGSLDSG). Phosphoserine occurs at positions 384 and 387. Positions 399–520 (ESALQRVQCV…KFVDKYSVSS (122 aa)) constitute an Arf-GAP domain. A C4-type zinc finger spans residues 414–437 (CCDCGLADPRWASINLGITLCIEC). Residues 518 to 596 (VSSSPPEQEK…EPEGERQDSS (79 aa)) form a disordered region. The residue at position 521 (serine 521) is a Phosphoserine. Positions 524 to 539 (EQEKKVVSKDSEEKRL) are enriched in basic and acidic residues. Residues 550–569 (VRTSIQSSVKSNDSGIQQSS) show a composition bias toward polar residues. Residues serine 581 and serine 584 each carry the phosphoserine modification. 3 ANK repeats span residues 640–669 (NKAT…NVNQ), 673–702 (QGRG…NQHA), and 706–735 (EGKD…NEEM). Tyrosine 742 bears the Phosphotyrosine mark. Residue serine 775 is modified to Phosphoserine.

In terms of assembly, interacts with RAB35 (GTP-bound form); the interaction is direct and probably recruits ACAP2 to membranes. Interacts with MICALL1; the interaction is indirect through RAB35.

Its subcellular location is the endosome membrane. The protein localises to the cell membrane. With respect to regulation, GAP activity stimulated by phosphatidylinositol 4,5-bisphosphate (PIP2) and phosphatidic acid. GTPase-activating protein (GAP) for ADP ribosylation factor 6 (ARF6). Doesn't show GAP activity for RAB35. The polypeptide is Arf-GAP with coiled-coil, ANK repeat and PH domain-containing protein 2 (ACAP2) (Oryctolagus cuniculus (Rabbit)).